A 247-amino-acid chain; its full sequence is UPF0259 membrane protein BU276 (247 aa).

6 consecutive transmembrane segments (helical) span residues 20-40 (IGAI…IDMF), 85-105 (IMES…LISV), 114-134 (IVSS…LNFL), 137-157 (FIIQ…SIIL), 188-208 (IIGP…MLLA), and 218-238 (LFLI…IYLF).

This sequence belongs to the UPF0259 family.

The protein localises to the cell membrane. The chain is UPF0259 membrane protein BU276 from Buchnera aphidicola subsp. Acyrthosiphon pisum (strain APS) (Acyrthosiphon pisum symbiotic bacterium).